The sequence spans 321 residues: PI-PLC X domain-containing protein 3 (321 aa).

A PI-PLC X-box domain is found at 22-197 (SIHSIPLTNL…DYQVLVFYHS (176 aa)). Active-site residues include histidine 37 and histidine 114.

This Bos taurus (Bovine) protein is PI-PLC X domain-containing protein 3 (PLCXD3).